Here is a 142-residue protein sequence, read N- to C-terminus: Large ribosomal subunit protein uL11 (142 aa).

The protein belongs to the universal ribosomal protein uL11 family. As to quaternary structure, part of the ribosomal stalk of the 50S ribosomal subunit. Interacts with L10 and the large rRNA to form the base of the stalk. L10 forms an elongated spine to which L12 dimers bind in a sequential fashion forming a multimeric L10(L12)X complex. Post-translationally, one or more lysine residues are methylated.

Its function is as follows. Forms part of the ribosomal stalk which helps the ribosome interact with GTP-bound translation factors. This is Large ribosomal subunit protein uL11 from Erwinia tasmaniensis (strain DSM 17950 / CFBP 7177 / CIP 109463 / NCPPB 4357 / Et1/99).